Consider the following 925-residue polypeptide: NADH:fumarate oxidoreductase (925 aa).

At T447 the chain carries FMN phosphoryl threonine. 7 residues coordinate FAD: A492, E511, N519, T520, A525, G526, and V633. Residue A525 coordinates fumarate. A525 is a succinate binding site. 3 residues coordinate succinate: H719, S731, and E732. Residues S731 and E732 each contribute to the fumarate site. R756 serves as the catalytic Proton donor. Fumarate is bound at residue H859. Succinate is bound at residue H859. Positions 860 and 889 each coordinate FAD. Positions 899 and 902 each coordinate fumarate. Residues R899 and G902 each coordinate succinate. Residues A904 and V905 each coordinate FAD.

This sequence belongs to the FAD-dependent oxidoreductase 2 family. FRD/SDH subfamily. As to quaternary structure, monomer. Requires FAD as cofactor. It depends on FMN as a cofactor. Post-translationally, is flavinylated on Thr-447 by ApbE2, encoded in a neighboring gene. Flavinylation is essential for catalytic activity.

It is found in the cytoplasm. It catalyses the reaction succinate + NAD(+) = fumarate + NADH + H(+). In terms of biological role, catalyzes the anaerobic reduction of fumarate to succinate. Uses NADH as the inherent electron donor in this process. Is involved in anaerobic fumarate respiration in K.pneumoniae. This is NADH:fumarate oxidoreductase from Klebsiella pneumoniae (strain 342).